The sequence spans 240 residues: Nuclear receptor-interacting protein 3 (240 aa).

The chain is Nuclear receptor-interacting protein 3 (NRIP3) from Pongo abelii (Sumatran orangutan).